The sequence spans 146 residues: 3-dehydroquinate dehydratase (146 aa).

Catalysis depends on tyrosine 24, which acts as the Proton acceptor. 3 residues coordinate substrate: asparagine 73, histidine 79, and aspartate 86. Residue histidine 99 is the Proton donor of the active site. Substrate contacts are provided by residues leucine 100–serine 101 and arginine 110.

The protein belongs to the type-II 3-dehydroquinase family. In terms of assembly, homododecamer.

It carries out the reaction 3-dehydroquinate = 3-dehydroshikimate + H2O. The protein operates within metabolic intermediate biosynthesis; chorismate biosynthesis; chorismate from D-erythrose 4-phosphate and phosphoenolpyruvate: step 3/7. In terms of biological role, catalyzes a trans-dehydration via an enolate intermediate. The protein is 3-dehydroquinate dehydratase of Shewanella baltica (strain OS195).